The chain runs to 108 residues: Protein RnfH (108 aa).

The tract at residues 86-108 (ARRRRAEKAKEEGRANKVTGGRA) is disordered.

It belongs to the UPF0125 (RnfH) family.

The chain is Protein RnfH from Pseudoalteromonas atlantica (strain T6c / ATCC BAA-1087).